A 268-amino-acid polypeptide reads, in one-letter code: Ribosomal RNA small subunit methyltransferase A (268 aa).

Residues Asn-23, Leu-25, Gly-50, Glu-72, Asp-94, and Asn-116 each contribute to the S-adenosyl-L-methionine site.

It belongs to the class I-like SAM-binding methyltransferase superfamily. rRNA adenine N(6)-methyltransferase family. RsmA subfamily.

The protein localises to the cytoplasm. The catalysed reaction is adenosine(1518)/adenosine(1519) in 16S rRNA + 4 S-adenosyl-L-methionine = N(6)-dimethyladenosine(1518)/N(6)-dimethyladenosine(1519) in 16S rRNA + 4 S-adenosyl-L-homocysteine + 4 H(+). Its function is as follows. Specifically dimethylates two adjacent adenosines (A1518 and A1519) in the loop of a conserved hairpin near the 3'-end of 16S rRNA in the 30S particle. May play a critical role in biogenesis of 30S subunits. The polypeptide is Ribosomal RNA small subunit methyltransferase A (Mycoplasmoides gallisepticum (strain R(low / passage 15 / clone 2)) (Mycoplasma gallisepticum)).